The following is a 424-amino-acid chain: Dapdiamide A synthase (424 aa).

The ATP-grasp domain occupies 120-318; sequence QEQLALKGVA…QISKLAQAVL (199 aa). Residue 147–209 coordinates ATP; sequence AGHAHWPVVL…QEFLAGEEFV (63 aa). Mg(2+) contacts are provided by E275 and E287.

Mg(2+) is required as a cofactor. Mn(2+) serves as cofactor.

The catalysed reaction is 3-[[[(2R,3R)-3-carboxyoxiran-2-yl]carbonyl]amino]-L-alanine + L-valine + ATP = dapdiamide E + ADP + phosphate + H(+). The enzyme catalyses N(3)-fumaramoyl-(S)-2,3-diaminopropanoate + L-valine + ATP = dapdiamide A + ADP + phosphate + H(+). It catalyses the reaction N(3)-fumaramoyl-(S)-2,3-diaminopropanoate + L-isoleucine + ATP = dapdiamide B + ADP + phosphate + H(+). It carries out the reaction N(3)-fumaramoyl-(S)-2,3-diaminopropanoate + L-leucine + ATP = dapdiamide C + ADP + phosphate + H(+). It participates in antibiotic biosynthesis. Functionally, involved in dapdiamide antibiotics biosynthesis. Ligates N-beta-fumaramoyl-DAP and valine, isoleucine or leucine to form dapdiamides A, B or C, respectively. Also ligates N-beta-epoxysuccinamoyl-DAP and valine to form dapdiamide E. The protein is Dapdiamide A synthase of Enterobacter agglomerans (Erwinia herbicola).